Consider the following 378-residue polypeptide: Mitogen-activated protein kinase mpkC (378 aa).

Positions 20–300 (YVNPQPIGMG…AQDALRYPYL (281 aa)) constitute a Protein kinase domain. Residues 26 to 34 (IGMGSFGLV) and lysine 49 contribute to the ATP site. Aspartate 141 (proton acceptor) is an active-site residue. Position 171 is a phosphothreonine (threonine 171). The TXY motif lies at 171–173 (TGY). Tyrosine 173 is modified (phosphotyrosine).

It belongs to the protein kinase superfamily. Ser/Thr protein kinase family. MAP kinase subfamily. HOG1 sub-subfamily. As to quaternary structure, interacts with sakA upon osmotic and cell wall stresses. The cofactor is Mg(2+). Dually phosphorylated on Thr-171 and Tyr-173, which activates the enzyme.

It is found in the cytoplasm. It localises to the nucleus. The catalysed reaction is L-seryl-[protein] + ATP = O-phospho-L-seryl-[protein] + ADP + H(+). The enzyme catalyses L-threonyl-[protein] + ATP = O-phospho-L-threonyl-[protein] + ADP + H(+). Activated by tyrosine and threonine phosphorylation. In terms of biological role, mitogen-activated protein kinase; part of an osmotic and general signal pathways involved in regulation of the response to the cell wall damage, oxidative stress, drug resistance, and establishment of infection. Required for growth on media where sorbitol or mannitol is the sole carbon source. With sakA, plays a redundant or cooperative role in the conidial stress resistance. Also plays a supportive role in osmotic stress adaptation when sakA is deficient. Involved in paradoxical growth, the cell wall integrity (CWI) pathway and biofilm formation. Acts by modulating sakA activity upon exposure to several types o stresses and during cell wall biosynthesis. Also collaborates with sakA to allow ful virulence in a neutropenic murine model of invasive pulmonary aspergillosis. MpkC and sakA have both independent and collaborative functions during the transcriptional response to transient osmotic stress, and mpkC plays a major role in the modulation of the response to DNA metabolism while activating mitochondrial functions and cation transport. In Aspergillus fumigatus (strain ATCC MYA-4609 / CBS 101355 / FGSC A1100 / Af293) (Neosartorya fumigata), this protein is Mitogen-activated protein kinase mpkC (mpkC).